The chain runs to 469 residues: NADH-quinone oxidoreductase subunit N (469 aa).

14 helical membrane-spanning segments follow: residues 6–26 (IWII…LLLG), 37–57 (VGVA…PAAL), 61–81 (LGVA…LTAA), 96–116 (ISGE…AVVS), 121–141 (LLIL…LVAI), 156–176 (LLLG…LYAA), 197–217 (PIAL…ISLV), 234–254 (VVAF…LLLL), 263–283 (LHTP…LAAL), 291–311 (MLAY…LTGS), 315–335 (FAAV…AFGA), 362–382 (AGIL…AGFI), 397–419 (IPLA…RVVV), and 441–461 (IALS…SPLL).

Belongs to the complex I subunit 2 family. As to quaternary structure, NDH-1 is composed of 14 different subunits. Subunits NuoA, H, J, K, L, M, N constitute the membrane sector of the complex.

Its subcellular location is the cell inner membrane. The catalysed reaction is a quinone + NADH + 5 H(+)(in) = a quinol + NAD(+) + 4 H(+)(out). NDH-1 shuttles electrons from NADH, via FMN and iron-sulfur (Fe-S) centers, to quinones in the respiratory chain. The immediate electron acceptor for the enzyme in this species is believed to be ubiquinone. Couples the redox reaction to proton translocation (for every two electrons transferred, four hydrogen ions are translocated across the cytoplasmic membrane), and thus conserves the redox energy in a proton gradient. This is NADH-quinone oxidoreductase subunit N from Geotalea uraniireducens (strain Rf4) (Geobacter uraniireducens).